A 375-amino-acid chain; its full sequence is Negative elongation factor E (375 aa).

Positions 7 to 36 (GLSEEEEALQKKFNKLKKKKKALLALKKQS) form a coiled coil. Residues 30–58 (LALKKQSSSGPASQGGVKRSLSEQPVVDT) form a disordered region. At Ser-51 the chain carries Phosphoserine. Residue Lys-78 forms a Glycyl lysine isopeptide (Lys-Gly) (interchain with G-Cter in SUMO1); alternate linkage. Residue Lys-78 forms a Glycyl lysine isopeptide (Lys-Gly) (interchain with G-Cter in SUMO2); alternate linkage. The interval 79–262 (AETKNSGFKR…SDSFPERRAP (184 aa)) is disordered. A Glycyl lysine isopeptide (Lys-Gly) (interchain with G-Cter in SUMO2) cross-link involves residue Lys-82. Over residues 90 to 101 (RTLEGKLKDPEK) the composition is skewed to basic and acidic residues. Phosphoserine is present on residues Ser-113 and Ser-115. Glu-122 bears the PolyADP-ribosyl glutamic acid mark. Phosphoserine occurs at positions 131 and 139. A PolyADP-ribosyl glutamic acid modification is found at Glu-151. A compositionally biased stretch (low complexity) spans 155–167 (APGAGDGPPRGFD). A PolyADP-ribosyl glutamic acid modification is found at Glu-172. Phosphoserine is present on residues Ser-179, Ser-181, Ser-185, and Ser-187. Tandem repeats lie at residues 184 to 185 (RS), 186 to 187 (RS), 188 to 189 (RD), and 190 to 191 (RS). The interval 184–247 (RSRSRDRSHD…RDRDRERDRE (64 aa)) is 32 X 2 AA approximate tandem repeats of R-[DSE]. Residues 186 to 260 (RSRDRSHDRS…RRSDSFPERR (75 aa)) show a composition bias toward basic and acidic residues. The residue at position 191 (Ser-191) is a Phosphoserine. Residues 192 to 193 (HD) form a 5; approximate repeat. Repeat copies occupy residues 194–195 (RS), 196–197 (RD), 198–199 (RD), and 200–201 (RD). A 10; approximate repeat occupies 202-203 (KE). Tandem repeats lie at residues 204 to 205 (RD), 206 to 207 (RD), 208 to 209 (RD), 210 to 211 (RD), 212 to 213 (RD), 214 to 215 (RD), and 216 to 217 (RD). The 18; approximate repeat unit spans residues 218-219 (KD). One copy of the 19; approximate repeat lies at 220 to 221 (KD). 4 consecutive repeat copies span residues 222-223 (RD), 224-225 (RD), 226-227 (RD), and 228-229 (RD). The stretch at 230–231 (KE) is one 24; approximate repeat. 8 tandem repeats follow at residues 232-233 (RD), 234-235 (RD), 236-237 (RD), 238-239 (RD), 240-241 (RD), 242-243 (RE), 244-245 (RD), and 246-247 (RE). Residues Ser-253 and Ser-255 each carry the phosphoserine modification. One can recognise an RRM domain in the interval 266 to 336 (NTLYVYGEDM…VQLKVNIARK (71 aa)). Residues Thr-276 and Thr-278 each carry the phosphothreonine modification. Phosphoserine occurs at positions 285 and 357.

This sequence belongs to the RRM NELF-E family. The NELF complex is composed of NELFA, NELFB, NELFCD and NELFE. Interacts with NELFB. Phosphorylated by the P-TEFb complex at sites next to its RNA recognition motif, promoting its release from chromatin. Post-translationally, sumoylated. In terms of processing, poly-ADP-ribosylated by PARP1, thereby preventing RNA-binding and relieving transcription pausing.

The protein resides in the nucleus. It is found in the chromosome. Essential component of the NELF complex, a complex that negatively regulates the elongation of transcription by RNA polymerase II. The NELF complex, which acts via an association with the DSIF complex and causes transcriptional pausing, is counteracted by the P-TEFb kinase complex. Provides the strongest RNA binding activity of the NELF complex and may initially recruit the NELF complex to RNA. This Mus musculus (Mouse) protein is Negative elongation factor E (Nelfe).